Consider the following 147-residue polypeptide: CRISP-1 (147 aa).

This sequence belongs to the CRISP family. Expressed by the venom gland.

The protein resides in the secreted. The chain is CRISP-1 from Phoneutria keyserlingi (Brazilian wandering spider).